Reading from the N-terminus, the 722-residue chain is Delta-like protein 1 (722 aa).

The N-terminal stretch at 1-17 (MGRRSALALAVVSALLC) is a signal peptide. The Extracellular portion of the chain corresponds to 18-545 (QVWSSGVFEL…MESQGGPFPW (528 aa)). Residues 176 to 220 (FVCDEHYYGEGCSVFCRPRDDAFGHFTCGDRGEKMCDPGWKGQYC) enclose the DSL domain. 27 cysteine pairs are disulfide-bonded: Cys-178-Cys-187, Cys-191-Cys-203, Cys-211-Cys-220, Cys-225-Cys-236, Cys-229-Cys-242, Cys-244-Cys-253, Cys-256-Cys-267, Cys-262-Cys-273, Cys-275-Cys-284, Cys-291-Cys-303, Cys-297-Cys-313, Cys-315-Cys-324, Cys-331-Cys-342, Cys-336-Cys-351, Cys-353-Cys-362, Cys-369-Cys-380, Cys-374-Cys-390, Cys-392-Cys-401, Cys-408-Cys-419, Cys-413-Cys-428, Cys-430-Cys-439, Cys-446-Cys-457, Cys-451-Cys-466, Cys-468-Cys-477, Cys-484-Cys-495, Cys-489-Cys-504, and Cys-506-Cys-515. 3 EGF-like domains span residues 225–253 (CLPG…GRYC), 256–284 (CIRY…GLFC), and 291–324 (CTHH…GANC). The region spanning 331–362 (CAPSPCKNGASCTDLEDSFSCTCPPGFYGKVC) is the EGF-like 4; calcium-binding domain. EGF-like domains lie at 369 to 401 (CADG…GFNC) and 408 to 439 (CGSS…GRYC). Residues 446-477 (CASSPCANGGTCRDSVNDFSCTCPPGYTGKNC) enclose the EGF-like 7; calcium-binding domain. Asn-476 is a glycosylation site (N-linked (GlcNAc...) asparagine). The region spanning 484 to 515 (CEHAPCHNGATCHQRGQRYMCECAQGYGGPNC) is the EGF-like 8 domain. A helical membrane pass occupies residues 546 to 568 (VAVCAGVVLVLLLLLGCAAVVVC). Over 569–722 (VRLKLQKHQP…KDECVIATEV (154 aa)) the chain is Cytoplasmic. A Glycyl lysine isopeptide (Lys-Gly) (interchain with G-Cter in ubiquitin) cross-link involves residue Lys-613. Thr-638 is modified (phosphothreonine). The span at 655–664 (RDTHSKRDTK) shows a compositional bias: basic and acidic residues. A disordered region spans residues 655 to 697 (RDTHSKRDTKCQSQSSAGEEKIAPTLRGGEIPDRKRPESVYST). Ser-693 bears the Phosphoserine; by PKB mark. Ser-696 carries the phosphoserine modification. An interaction with MAGI1 region spans residues 719–722 (ATEV).

Homodimer. Interacts with TJP1. Interacts with MMP14; inhibits DLL1-induced Notch signaling. Interacts with MAGI1 (via PDZ domain); forms a complex with CTNNB1 and CDH2 and promotes recruitment to the adherens junction and stabilization on the cell surface. Interacts with PSEN1; undergoes a presenilin-dependent gamma-secretase cleavage that releases a Dll1-intracellular form. Interacts with MFAP5. Interacts with MIB1. Interacts with NEURL1B; leads to ubiquitination. Interacts with NEURL1. Interacts with SYNJ2BP; enhances DLL1 protein stability, and promotes Notch signaling in endothelial cells. Interacts with MAGI1, MAGI2, MAGI3 and MPDZ. Interacts (via ubiquitin) with EPN1 (via IUM domain); binding with NOTCH1 attached to neighboring cell, promotes ligand ubiquitination and EPN1 interaction, leading to NECD transendocytosis and Notch signaling. Interacts with NOTCH1. Ubiquitinated by MIB (MIB1 or MIB2), leading to its endocytosis and subsequent degradation. Ubiquitinated; promotes recycling back to the plasma membrane and confers a strong affinity for NOTCH1. Multi-ubiquitination of Lys-613 by MIB1 promotes both cis and trans-interaction with NOTCH1, as well as activation of Notch signaling. Ubiquitinated by NEURL1B. In terms of processing, phosphorylated in a membrane association-dependent manner. Phosphorylation at Ser-696 requires the presence of Ser-693, whereas phosphorylation at Thr-638 and Ser-693 occurs independently of the other sites. Phosphorylation is required for full ligand activity in vitro and affects surface presentation, ectodomain shedding, and endocytosis. Post-translationally, cleaved by MMP14; negatively regulates DLL1-induced Notch signaling in HPCs, modulating B-lymphocyte differentiation in bone marrow. Undergoes two consecutive processing events: a shedding event, partially by ADAM10, that generates a soluble extracellular form and an intracellular membrane-anchored form, followed by a gamma-secretase cleavage releasing an intracellular fragment. O-fucosylated. Can be elongated to a disaccharide by MFNG. As to expression, in the embryo, expressed in the paraxial mesoderm and nervous system. Expressed at high levels in adult heart and at lower levels, in adult lung. Highly expressed in satellite cells from masseter and tongue than in satellite cells from leg and extraocular muscle.?.

It is found in the apical cell membrane. Its subcellular location is the cell junction. It localises to the adherens junction. The protein localises to the membrane raft. The protein resides in the cell membrane. It is found in the nucleus. Transmembrane ligand protein of NOTCH1, NOTCH2 and NOTCH3 receptors that binds the extracellular domain (ECD) of Notch receptor in a cis and trans fashion manner. Following transinteraction, ligand cells produce mechanical force that depends of a clathrin-mediated endocytosis, requiring ligand ubiquitination, EPN1 interaction, and actin polymerisation; these events promote Notch receptor extracellular domain (NECD) transendocytosis and triggers Notch signaling through induction of cleavage, hyperphosphorylation, and nuclear accumulation of the intracellular domain of Notch receptors (NICD). Is required for embryonic development and maintenance of adult stem cells in many different tissues and immune systeme; the DLL1-induced Notch signaling is mediated through an intercellular communication that regulates cell lineage, cell specification, cell patterning and morphogenesis through effects on differentiation and proliferation. Plays a role in brain development at different level, namely by regulating neuronal differentiation of neural precursor cells via cell-cell interaction, most likely through the lateral inhibitory system in an endogenous level dependent-manner. During neocortex development, Dll1-Notch signaling transmission is mediated by dynamic interactions between intermediate neurogenic progenitors and radial glia; the cell-cell interactions are mediated via dynamic and transient elongation processes, likely to reactivate/maintain Notch activity in neighboring progenitors, and coordinate progenitor cell division and differentiation across radial and zonal boundaries. During cerebellar development, regulates Bergmann glial monolayer formation and its morphological maturation through a Notch signaling pathway. At the retina and spinal cord level, regulates neurogenesis by preventing the premature differentiation of neural progenitors and also by maintaining progenitors in spinal cord through Notch signaling pathway. Also controls neurogenesis of the neural tube in a progenitor domain-specific fashion along the dorsoventral axis. Maintains quiescence of neural stem cells and plays a role as a fate determinant that segregates asymmetrically to one daughter cell during neural stem cells mitosis, resulting in neuronal differentiation in Dll1-inheriting cell. Plays a role in immune systeme development, namely the development of all T-cells and marginal zone (MZ) B cells. Blocks the differentiation of progenitor cells into the B-cell lineage while promoting the emergence of a population of cells with the characteristics of a T-cell/NK-cell precursor. Upon MMP14 cleavage, negatively regulates Notch signaling in haematopoietic progenitor cells to specifically maintain normal B-cell development in bone marrow. Also plays a role during muscle development. During early development, inhibits myoblasts differentiation from the medial dermomyotomal lip and later regulates progenitor cell differentiation. Directly modulates cell adhesion and basal lamina formation in satellite cells through Notch signaling. Maintains myogenic progenitors pool by suppressing differentiation through down-regulation of MYOD1 and is required for satellite cell homing and PAX7 expression. During craniofacial and trunk myogenesis suppresses differentiation of cranial mesoderm-derived and somite-derived muscle via MYOD1 regulation but in cranial mesoderm-derived progenitors, is neither required for satellite cell homing nor for PAX7 expression. Also plays a role during pancreatic cell development. During type B pancreatic cell development, may be involved in the initiation of proximodistal patterning in the early pancreatic epithelium. Stimulates multipotent pancreatic progenitor cells proliferation and pancreatic growth by maintaining HES1 expression and PTF1A protein levels. During fetal stages of development, is required to maintain arterial identity and the responsiveness of arterial endothelial cells for VEGFA through regulation of KDR activation and NRP1 expression. Controls sprouting angiogenesis and subsequent vertical branch formation through regulation on tip cell differentiation. Negatively regulates goblet cell differentiation in intestine and controls secretory fat commitment through lateral inhibition in small intestine. Plays a role during inner ear development; negatively regulates auditory hair cell differentiation. Plays a role during nephron development through Notch signaling pathway. Regulates growth, blood pressure and energy homeostasis. This chain is Delta-like protein 1 (Dll1), found in Mus musculus (Mouse).